A 53-amino-acid polypeptide reads, in one-letter code: Small ribosomal subunit protein uS14m (53 aa).

Belongs to the universal ribosomal protein uS14 family.

It localises to the mitochondrion. The polypeptide is Small ribosomal subunit protein uS14m (RPS14) (Bigelowiella natans (Pedinomonas minutissima)).